The sequence spans 88 residues: MPYLIVTYDIAEERVNKVRKILKKYFMWVQNSVFEGEITEGKLLKCKLELEKVIDKEVDSVYFYSLENRLNYRKTVLGIEKEITGNIL.

Aspartate 9 contacts Mg(2+).

Belongs to the CRISPR-associated endoribonuclease Cas2 protein family. As to quaternary structure, homodimer, forms a heterotetramer with a Cas1 homodimer. The cofactor is Mg(2+).

CRISPR (clustered regularly interspaced short palindromic repeat), is an adaptive immune system that provides protection against mobile genetic elements (viruses, transposable elements and conjugative plasmids). CRISPR clusters contain sequences complementary to antecedent mobile elements and target invading nucleic acids. CRISPR clusters are transcribed and processed into CRISPR RNA (crRNA). Functions as a ssRNA-specific endoribonuclease. Involved in the integration of spacer DNA into the CRISPR cassette. This is CRISPR-associated endoribonuclease Cas2 3 from Thermodesulfovibrio yellowstonii (strain ATCC 51303 / DSM 11347 / YP87).